The chain runs to 689 residues: 1,4-alpha-glucan-branching enzyme (689 aa).

2 residues coordinate (1,4-alpha-D-glucosyl)n: W93 and K128. The active-site Nucleophile is D345. E400 acts as the Proton donor in catalysis.

The protein belongs to the glycosyl hydrolase 13 family. GlgB subfamily.

The protein resides in the cytoplasm. It catalyses the reaction Transfers a segment of a (1-&gt;4)-alpha-D-glucan chain to a primary hydroxy group in a similar glucan chain.. It participates in glycan biosynthesis; glycogen biosynthesis. Its function is as follows. Glycogen-branching enzyme participates in the glycogen biosynthetic process along with glycogenin and glycogen synthase. Generates alpha-1,6-glucosidic branches from alpha-1,4-linked glucose chains, to increase solubility of the glycogen polymer. In Aspergillus oryzae (strain ATCC 42149 / RIB 40) (Yellow koji mold), this protein is 1,4-alpha-glucan-branching enzyme (gbeA).